The following is a 565-amino-acid chain: Mitochondrial distribution and morphology protein 34 (565 aa).

The SMP-LTD domain occupies 1-195 (MAFNFNWSPL…LPAIIHRLSL (195 aa)). 3 disordered regions span residues 207 to 236 (EDQDQNTNTAGEGPGQDPLASPPQDPVDAL), 296 to 317 (PSDQGDISGGVTSPLSPALSRT), and 348 to 504 (STYG…RQLP). A compositionally biased stretch (basic residues) spans 358 to 370 (RHSKAHARKRKKR). Positions 371-381 (VVDLRRPKQPE) are enriched in basic and acidic residues. Over residues 382–401 (SETASVTDESSFTETTSAPS) the composition is skewed to polar residues. 2 stretches are compositionally biased toward basic and acidic residues: residues 446–472 (LRRDIATEMLRETGESSSEPARRHAEV) and 483–496 (IRHEPSRYEGEKQE).

The protein belongs to the MDM34 family. Component of the ER-mitochondria encounter structure (ERMES) or MDM complex, composed of mmm1, mdm10, mdm12 and mdm34.

The protein resides in the mitochondrion outer membrane. Its function is as follows. Component of the ERMES/MDM complex, which serves as a molecular tether to connect the endoplasmic reticulum (ER) and mitochondria. Components of this complex are involved in the control of mitochondrial shape and protein biogenesis, and function in nonvesicular lipid trafficking between the ER and mitochondria. Mdm34 is required for the interaction of the ER-resident membrane protein mmm1 and the outer mitochondrial membrane-resident beta-barrel protein mdm10. This chain is Mitochondrial distribution and morphology protein 34, found in Aspergillus terreus (strain NIH 2624 / FGSC A1156).